The sequence spans 410 residues: Multifunctional CCA protein (410 aa).

Positions 8 and 11 each coordinate ATP. The CTP site is built by Gly8 and Arg11. Residues Glu21 and Asp23 each coordinate Mg(2+). ATP contacts are provided by Arg91, Arg137, and Arg140. Arg91, Arg137, and Arg140 together coordinate CTP. One can recognise an HD domain in the interval 228 to 329 (TGIHSLMTLR…VKLLEQVDAF (102 aa)).

It belongs to the tRNA nucleotidyltransferase/poly(A) polymerase family. Bacterial CCA-adding enzyme type 1 subfamily. In terms of assembly, monomer. Can also form homodimers and oligomers. It depends on Mg(2+) as a cofactor. The cofactor is Ni(2+).

It catalyses the reaction a tRNA precursor + 2 CTP + ATP = a tRNA with a 3' CCA end + 3 diphosphate. It carries out the reaction a tRNA with a 3' CCA end + 2 CTP + ATP = a tRNA with a 3' CCACCA end + 3 diphosphate. Functionally, catalyzes the addition and repair of the essential 3'-terminal CCA sequence in tRNAs without using a nucleic acid template. Adds these three nucleotides in the order of C, C, and A to the tRNA nucleotide-73, using CTP and ATP as substrates and producing inorganic pyrophosphate. tRNA 3'-terminal CCA addition is required both for tRNA processing and repair. Also involved in tRNA surveillance by mediating tandem CCA addition to generate a CCACCA at the 3' terminus of unstable tRNAs. While stable tRNAs receive only 3'-terminal CCA, unstable tRNAs are marked with CCACCA and rapidly degraded. In Legionella pneumophila subsp. pneumophila (strain Philadelphia 1 / ATCC 33152 / DSM 7513), this protein is Multifunctional CCA protein.